Reading from the N-terminus, the 911-residue chain is Nitrate reductase [NADH], clone PBNBR1405 (911 aa).

The tract at residues 1–68 is disordered; sequence MATSVDNRHY…RFDSSDDEDE (68 aa). Residues 49 to 62 show a composition bias toward basic and acidic residues; sequence KSVDKTTKEDRFDS. Cysteine 191 lines the Mo-molybdopterin pocket. In terms of domain architecture, Cytochrome b5 heme-binding spans 539 to 614; it reads SKMYSMSEVR…LEDYRIGELI (76 aa). 2 residues coordinate heme: histidine 574 and histidine 597. In terms of domain architecture, FAD-binding FR-type spans 654-766; the sequence is REKVPVKLIE…KGPLGHIEYQ (113 aa). FAD contacts are provided by residues 706-709, 723-727, phenylalanine 728, phenylalanine 735, 740-742, and threonine 793; these read RAYT, VIKVY, and LMS.

It belongs to the nitrate reductase family. In terms of assembly, homodimer. Requires FAD as cofactor. It depends on heme as a cofactor. The cofactor is Mo-molybdopterin.

It carries out the reaction nitrite + NAD(+) + H2O = nitrate + NADH + H(+). Nitrate reductase is a key enzyme involved in the first step of nitrate assimilation in plants, fungi and bacteria. The chain is Nitrate reductase [NADH], clone PBNBR1405 (NIA1) from Brassica napus (Rape).